The primary structure comprises 929 residues: Diacylglycerol kinase zeta (929 aa).

Residues 1 to 14 (MEPRDPSPEARSSD) are compositionally biased toward basic and acidic residues. Disordered stretches follow at residues 1 to 46 (MEPR…RRFP) and 59 to 80 (KSGL…GESE). The span at 15-24 (SESASASSSG) shows a compositional bias: low complexity. Basic and acidic residues predominate over residues 25 to 37 (SERDADPEPDKAP). 2 consecutive Phorbol-ester/DAG-type zinc fingers follow at residues 98–153 (HIWF…NFRC) and 173–231 (HHWV…EEPC). The segment at 257-281 (KASKKKKRASFKRRSSKKGPEEGRW) is disordered. The span at 258–273 (ASKKKKRASFKRRSSK) shows a compositional bias: basic residues. A mediates interaction with RASGRP1 region spans residues 279-417 (GRWRPFIIRP…HVEEGNVVQL (139 aa)). In terms of domain architecture, DAGKc spans 292–426 (PLMKPLLVFV…LDRWDLRAEP (135 aa)). Residues 362–370 (LSTLDQLRL) carry the Nuclear export signal motif. The segment at 421 to 441 (DLRAEPNPEAGPEERDDGATD) is disordered. Ser-706 is modified (phosphoserine). Residues 760–783 (ARPDLPTPTSPLPASPCSPTPGSL) form a disordered region. Residues 764-778 (LPTPTSPLPASPCSP) show a composition bias toward pro residues. Ser-782 is subject to Phosphoserine. ANK repeat units lie at residues 823–853 (QSRT…EILD) and 858–887 (NGET…SLMK). The short motif at 925-929 (QETAV) is the PDZ-binding element.

It belongs to the eukaryotic diacylglycerol kinase family. Interacts (via PDZ-binding motif) with the PDZ domain of the syntrophin SNTG1 and that of SNX27. Interacts with IRS1 in the absence of insulin; insulin stimulation decreases this interaction. Found in a ternary complex with IRS1 and PIP5K1A in the absence of insulin. Interacts with PIP5K1A. Forms a signaling complex with RASGRP1 and HRAS.

The protein localises to the nucleus. Its subcellular location is the cytoplasm. The protein resides in the cytosol. It localises to the cell membrane. It is found in the cell projection. The protein localises to the lamellipodium. The catalysed reaction is a 1,2-diacyl-sn-glycerol + ATP = a 1,2-diacyl-sn-glycero-3-phosphate + ADP + H(+). It catalyses the reaction a 1-O-alkyl-sn-glycerol + ATP = a 1-O-alkyl-sn-glycero-3-phosphate + ADP + H(+). The enzyme catalyses 1-O-alkyl-2-acyl-sn-glycerol + ATP = 1-O-alkyl-2-acyl-sn-glycero-3-phosphate + ADP + H(+). It carries out the reaction 1,2-didecanoyl-sn-glycerol + ATP = 1,2-didecanoyl-sn-glycero-3-phosphate + ADP + H(+). The catalysed reaction is 1,2-ditetradecanoyl-sn-glycerol + ATP = 1,2-ditetradecanoyl-sn-glycero-3-phosphate + ADP + H(+). It catalyses the reaction 1-hexadecanoyl-2-(9Z-octadecenoyl)-sn-glycerol + ATP = 1-hexadecanoyl-2-(9Z-octadecenoyl)-sn-glycero-3-phosphate + ADP + H(+). The enzyme catalyses 1-hexadecanoyl-2-(5Z,8Z,11Z,14Z-eicosatetraenoyl)-sn-glycerol + ATP = 1-hexadecanoyl-2-(5Z,8Z,11Z,14Z-eicosatetraenoyl)-sn-glycero-3-phosphate + ADP + H(+). It carries out the reaction 1-octadecanoyl-2-(9Z-octadecenoyl)-sn-glycerol + ATP = 1-octadecanoyl-2-(9Z-octadecenoyl)-sn-glycero-3-phosphate + ADP + H(+). The catalysed reaction is 1-octadecanoyl-2-(5Z,8Z,11Z,14Z-eicosatetraenoyl)-sn-glycerol + ATP = 1-octadecanoyl-2-(5Z,8Z,11Z,14Z-eicosatetraenoyl)-sn-glycero-3-phosphate + ADP + H(+). It catalyses the reaction 1-octadecanoyl-2-(4Z,7Z,10Z,13Z,16Z,19Z-docosahexaenoyl)-sn-glycerol + ATP = 1-octadecanoyl-2-(4Z,7Z,10Z,13Z,16Z,19Z-docosahexaenoyl)-sn-glycero-3-phosphate + ADP + H(+). The enzyme catalyses 1,2-di-(9Z-octadecenoyl)-sn-glycerol + ATP = 1,2-di-(9Z-octadecenoyl)-sn-glycero-3-phosphate + ADP + H(+). It carries out the reaction 1-(9Z-octadecenoyl)-2-hexadecanoyl-sn-glycerol + ATP = 1-(9Z)-octadecenoyl-2-hexadecanoyl-sn-glycero-3-phosphate + ADP + H(+). The catalysed reaction is 1-eicosanoyl-2-(5Z,8Z,11Z,14Z)-eicosatetraenoyl-sn-glycerol + ATP = 1-eicosanoyl-2-(5Z,8Z,11Z,14Z)-eicosatetraenoyl-sn-glycero-3-phosphate + ADP + H(+). It catalyses the reaction 1,2-di-(5Z,8Z,11Z,14Z)-eicosatetraenoyl-sn-glycerol + ATP = 1,2-di-(5Z,8Z,11Z,14Z)-eicosatetraenoyl-sn-glycero-3-phosphate + ADP + H(+). The enzyme catalyses 1-O-hexadecyl-2-acetyl-sn-glycerol + ATP = 1-O-hexadecyl-2-acetyl-sn-glycero-3-phosphate + ADP + H(+). It carries out the reaction 1-O-hexadecyl-2-(5Z,8Z,11Z,14Z-eicosatetraenoyl)-sn-glycerol + ATP = 1-O-hexadecyl-2-(5Z,8Z,11Z,14Z-eicosatetraenoyl)-sn-glycero-3-phosphate + ADP + H(+). The catalysed reaction is 1-O-hexadecyl-2-(9Z-octadecenoyl)-sn-glycerol + ATP = 1-O-hexadecyl-2-(9Z-octadecenoyl)-sn-glycero-3-phosphate + ADP + H(+). It catalyses the reaction 1-O-hexadecyl-sn-glycerol + ATP = 1-O-hexadecyl-sn-glycero-3-phosphate + ADP + H(+). It participates in lipid metabolism; glycerolipid metabolism. Its function is as follows. Diacylglycerol kinase that converts diacylglycerol/DAG into phosphatidic acid/phosphatidate/PA and regulates the respective levels of these two bioactive lipids. Thereby, acts as a central switch between the signaling pathways activated by these second messengers with different cellular targets and opposite effects in numerous biological processes. Also plays an important role in the biosynthesis of complex lipids. Does not exhibit an acyl chain-dependent substrate specificity among diacylglycerol species. Can also phosphorylate 1-alkyl-2-acylglycerol in vitro but less efficiently and with a preference for alkylacylglycerols containing an arachidonoyl group. The biological processes it is involved in include T cell activation since it negatively regulates T-cell receptor signaling which is in part mediated by diacylglycerol. By generating phosphatidic acid, stimulates PIP5KIA activity which regulates actin polymerization. Through the same mechanism could also positively regulate insulin-induced translocation of SLC2A4 to the cell membrane. Regulates RASGRP1 activity. This chain is Diacylglycerol kinase zeta, found in Rattus norvegicus (Rat).